We begin with the raw amino-acid sequence, 858 residues long: Bifunctional uridylyltransferase/uridylyl-removing enzyme (858 aa).

The uridylyltransferase stretch occupies residues 1–324 (MSASVAEPPP…PATSGVTRVL (324 aa)). Residues 325-681 (SPGRFVEKQG…ARPSPVGDAL (357 aa)) are uridylyl-removing. The 123-residue stretch at 443-565 (VDQHILMVLR…VGSERRLTAL (123 aa)) folds into the HD domain. ACT domains lie at 682–761 (QVLV…PEPS) and 790–858 (ILSV…AIAV).

The protein belongs to the GlnD family. The cofactor is Mg(2+).

It carries out the reaction [protein-PII]-L-tyrosine + UTP = [protein-PII]-uridylyl-L-tyrosine + diphosphate. The enzyme catalyses [protein-PII]-uridylyl-L-tyrosine + H2O = [protein-PII]-L-tyrosine + UMP + H(+). Uridylyltransferase (UTase) activity is inhibited by glutamine, while glutamine activates uridylyl-removing (UR) activity. Functionally, modifies, by uridylylation and deuridylylation, the PII regulatory proteins (GlnB and homologs), in response to the nitrogen status of the cell that GlnD senses through the glutamine level. Under low glutamine levels, catalyzes the conversion of the PII proteins and UTP to PII-UMP and PPi, while under higher glutamine levels, GlnD hydrolyzes PII-UMP to PII and UMP (deuridylylation). Thus, controls uridylylation state and activity of the PII proteins, and plays an important role in the regulation of nitrogen assimilation and metabolism. In Burkholderia pseudomallei (strain 1106a), this protein is Bifunctional uridylyltransferase/uridylyl-removing enzyme.